We begin with the raw amino-acid sequence, 183 residues long: GMP synthase [glutamine-hydrolyzing] subunit A (183 aa).

Positions 2-183 constitute a Glutamine amidotransferase type-1 domain; the sequence is KIYVIYNYGQ…YRNFIEICKK (182 aa). Cys-74 functions as the Nucleophile in the catalytic mechanism. Catalysis depends on residues His-161 and Glu-163.

Heterodimer composed of a glutamine amidotransferase subunit (A) and a GMP-binding subunit (B).

The catalysed reaction is XMP + L-glutamine + ATP + H2O = GMP + L-glutamate + AMP + diphosphate + 2 H(+). Its pathway is purine metabolism; GMP biosynthesis; GMP from XMP (L-Gln route): step 1/1. Functionally, catalyzes the synthesis of GMP from XMP. This chain is GMP synthase [glutamine-hydrolyzing] subunit A, found in Archaeoglobus fulgidus (strain ATCC 49558 / DSM 4304 / JCM 9628 / NBRC 100126 / VC-16).